A 663-amino-acid polypeptide reads, in one-letter code: Ras and EF-hand domain-containing protein (663 aa).

2 consecutive EF-hand domains span residues 1 to 33 (MNHA…CREL) and 35 to 70 (VPAD…VSEA). Ca(2+)-binding residues include Asp14, Asn16, Ser18, Arg20, Asp25, Asp48, Asp50, Asp52, Tyr54, and Asp59. Residues 122–297 (ELLLQQFEDL…LKKMVMEFQS (176 aa)) adopt a coiled-coil conformation. A compositionally biased stretch (polar residues) spans 324–336 (SQENASTKRQLSP). The disordered stretch occupies residues 324 to 343 (SQENASTKRQLSPRNEVLPR). GTP-binding positions include 477-482 (GSGKSS), 580-583 (NKVD), and 615-616 (AK).

This sequence belongs to the small GTPase superfamily. Rab family. In terms of assembly, homodimer.

It localises to the cytoplasm. Its subcellular location is the perinuclear region. Its function is as follows. Binds predominantly GDP, and also GTP. The polypeptide is Ras and EF-hand domain-containing protein (rasef) (Danio rerio (Zebrafish)).